The following is a 477-amino-acid chain: tRNA-2-methylthio-N(6)-dimethylallyladenosine synthase (477 aa).

The MTTase N-terminal domain occupies arginine 9–threonine 129. Positions 18, 54, 92, 170, 174, and 177 each coordinate [4Fe-4S] cluster. The region spanning arginine 156–glutamine 386 is the Radical SAM core domain. The 63-residue stretch at arginine 391–serine 453 folds into the TRAM domain. The interval lysine 454–alanine 477 is disordered. Over residues alanine 464–alanine 477 the composition is skewed to low complexity.

This sequence belongs to the methylthiotransferase family. MiaB subfamily. In terms of assembly, monomer. The cofactor is [4Fe-4S] cluster.

The protein resides in the cytoplasm. It catalyses the reaction N(6)-dimethylallyladenosine(37) in tRNA + (sulfur carrier)-SH + AH2 + 2 S-adenosyl-L-methionine = 2-methylsulfanyl-N(6)-dimethylallyladenosine(37) in tRNA + (sulfur carrier)-H + 5'-deoxyadenosine + L-methionine + A + S-adenosyl-L-homocysteine + 2 H(+). Catalyzes the methylthiolation of N6-(dimethylallyl)adenosine (i(6)A), leading to the formation of 2-methylthio-N6-(dimethylallyl)adenosine (ms(2)i(6)A) at position 37 in tRNAs that read codons beginning with uridine. The polypeptide is tRNA-2-methylthio-N(6)-dimethylallyladenosine synthase (Nitrobacter winogradskyi (strain ATCC 25391 / DSM 10237 / CIP 104748 / NCIMB 11846 / Nb-255)).